The following is a 269-amino-acid chain: Eukaryotic translation initiation factor 3 subunit G (269 aa).

The segment at 140–181 is disordered; that stretch reads AIGGGDMSAQGGSGSGRYVPPSLRAGARDPSSNAYQDQRERD. Residues 141–154 show a composition bias toward gly residues; it reads IGGGDMSAQGGSGS. Phosphoserine is present on Ser-161. The region spanning 184–263 is the RRM domain; that stretch reads KTIRLTQVNE…FMLHAEWSKP (80 aa).

Belongs to the eIF-3 subunit G family. Component of the eukaryotic translation initiation factor 3 (eIF-3) complex.

Its subcellular location is the cytoplasm. RNA-binding component of the eukaryotic translation initiation factor 3 (eIF-3) complex, which is involved in protein synthesis of a specialized repertoire of mRNAs and, together with other initiation factors, stimulates binding of mRNA and methionyl-tRNAi to the 40S ribosome. The eIF-3 complex specifically targets and initiates translation of a subset of mRNAs involved in cell proliferation. This subunit can bind 18S rRNA. The sequence is that of Eukaryotic translation initiation factor 3 subunit G from Kluyveromyces lactis (strain ATCC 8585 / CBS 2359 / DSM 70799 / NBRC 1267 / NRRL Y-1140 / WM37) (Yeast).